Reading from the N-terminus, the 212-residue chain is ATP phosphoribosyltransferase (212 aa).

The protein belongs to the ATP phosphoribosyltransferase family. Short subfamily. As to quaternary structure, heteromultimer composed of HisG and HisZ subunits.

It is found in the cytoplasm. It carries out the reaction 1-(5-phospho-beta-D-ribosyl)-ATP + diphosphate = 5-phospho-alpha-D-ribose 1-diphosphate + ATP. It participates in amino-acid biosynthesis; L-histidine biosynthesis; L-histidine from 5-phospho-alpha-D-ribose 1-diphosphate: step 1/9. Its function is as follows. Catalyzes the condensation of ATP and 5-phosphoribose 1-diphosphate to form N'-(5'-phosphoribosyl)-ATP (PR-ATP). Has a crucial role in the pathway because the rate of histidine biosynthesis seems to be controlled primarily by regulation of HisG enzymatic activity. The protein is ATP phosphoribosyltransferase of Prochlorococcus marinus (strain MIT 9301).